Reading from the N-terminus, the 60-residue chain is Three-finger toxin MS3 (60 aa).

4 disulfide bridges follow: Cys-3–Cys-22, Cys-15–Cys-39, Cys-41–Cys-52, and Cys-53–Cys-58.

This sequence belongs to the three-finger toxin family. Short-chain subfamily. Type I alpha-neurotoxin sub-subfamily. In terms of tissue distribution, expressed by the venom gland.

The protein resides in the secreted. Functionally, produces peripheral paralysis by blocking neuromuscular transmission at the postsynaptic site. Binds to and inhibits the endogenous nicotinic acetylcholine receptors (nAChR) in human rhabdomyosarcoma TE 671 cell line with an IC(50) of 346 mM. This neurotoxin is lethal to mice by intraperitoneal injection and to zebrafish by injection at the back of the dorsolateral region. The protein is Three-finger toxin MS3 of Micrurus surinamensis (Surinam coral snake).